Consider the following 76-residue polypeptide: Conotoxin VnMKLT2-013 (76 aa).

An N-terminal signal peptide occupies residues methionine 1 to alanine 23. The propeptide occupies glutamate 24–arginine 42. The disordered stretch occupies residues tyrosine 29–threonine 49. 3 disulfide bridges follow: cysteine 47/cysteine 58, cysteine 52/cysteine 63, and cysteine 57/cysteine 72.

The protein belongs to the conotoxin O1 superfamily. Expressed by the venom duct.

Its subcellular location is the secreted. The protein is Conotoxin VnMKLT2-013 of Conus ventricosus (Mediterranean cone).